We begin with the raw amino-acid sequence, 251 residues long: uncharacterized protein (251 aa).

This is an uncharacterized protein from Mycoplasma genitalium (strain ATCC 33530 / DSM 19775 / NCTC 10195 / G37) (Mycoplasmoides genitalium).